The chain runs to 214 residues: 3-isopropylmalate dehydratase small subunit (214 aa).

This sequence belongs to the LeuD family. LeuD type 1 subfamily. As to quaternary structure, heterodimer of LeuC and LeuD.

It catalyses the reaction (2R,3S)-3-isopropylmalate = (2S)-2-isopropylmalate. Its pathway is amino-acid biosynthesis; L-leucine biosynthesis; L-leucine from 3-methyl-2-oxobutanoate: step 2/4. Functionally, catalyzes the isomerization between 2-isopropylmalate and 3-isopropylmalate, via the formation of 2-isopropylmaleate. The polypeptide is 3-isopropylmalate dehydratase small subunit (Nitrosococcus oceani (strain ATCC 19707 / BCRC 17464 / JCM 30415 / NCIMB 11848 / C-107)).